Here is a 415-residue protein sequence, read N- to C-terminus: Beta-1,4-glucuronyltransferase 1 (415 aa).

The Cytoplasmic segment spans residues 1–8; that stretch reads MQMSYAIR. A helical; Signal-anchor for type II membrane protein transmembrane segment spans residues 9-36; that stretch reads CAFYQLLLAALMLVAMLQLLYLSLLSGL. Over 37–415 the chain is Lumenal; it reads HGQEEQDQYF…AKYPNSPRRC (379 aa). N-linked (GlcNAc...) asparagine glycosylation is present at Asn-204. Residues Asp-227 and Asp-229 each contribute to the Mn(2+) site. An N-linked (GlcNAc...) asparagine glycan is attached at Asn-300.

It belongs to the glycosyltransferase 49 family. As to quaternary structure, interacts with LARGE1 and LARGE2. It depends on Mn(2+) as a cofactor. In terms of tissue distribution, in the adult, highly expressed in heart, brain, skeletal muscle and kidney and to a lesser extent in placenta, pancreas, spleen, prostate, testis, ovary, small intestine and colon. Very weak expression in lung, liver, thymus and peripheral blood leukocytes. In fetal highly expressed in brain and kidney and to a lesser extent in lung and liver.

Its subcellular location is the golgi apparatus membrane. It catalyses the reaction 3-O-[beta-D-Xyl-(1-&gt;4)-Rib-ol-P-Rib-ol-P-3-beta-D-GalNAc-(1-&gt;3)-beta-D-GlcNAc-(1-&gt;4)-(O-6-P-alpha-D-Man)]-Thr-[protein] + UDP-alpha-D-glucuronate = 3-O-[beta-D-GlcA-(1-&gt;3)-beta-D-Xyl-(1-&gt;4)-Rib-ol-P-Rib-ol-P-3-beta-D-GalNAc-(1-&gt;3)-beta-D-GlcNAc-(1-&gt;4)-(O-6-P-alpha-D-Man)]-Thr-[protein] + UDP + H(+). It functions in the pathway protein modification; protein glycosylation. In terms of biological role, beta-1,4-glucuronyltransferase involved in O-mannosylation of alpha-dystroglycan (DAG1). Transfers a glucuronic acid (GlcA) residue onto a xylose (Xyl) acceptor to produce the glucuronyl-beta-1,4-xylose-beta disaccharide primer, which is further elongated by LARGE1, during synthesis of phosphorylated O-mannosyl glycan. Phosphorylated O-mannosyl glycan is a carbohydrate structure present in alpha-dystroglycan (DAG1), which is required for binding laminin G-like domain-containing extracellular proteins with high affinity. Required for axon guidance; via its function in O-mannosylation of alpha-dystroglycan (DAG1). The protein is Beta-1,4-glucuronyltransferase 1 of Homo sapiens (Human).